A 248-amino-acid polypeptide reads, in one-letter code: Acetoacetyl-CoA reductase (248 aa).

Residues 14–16 (GGI), R42, and 90–94 (NAGIT) contribute to the NADP(+) site. Residues D96 and 149–152 (QFGQ) contribute to the substrate site. Y155 acts as the Proton acceptor in catalysis. 185–188 (PGYT) lines the NADP(+) pocket. Substrate is bound by residues 186-187 (GY) and R197.

It belongs to the short-chain dehydrogenases/reductases (SDR) family.

The protein localises to the cytoplasm. It catalyses the reaction a (3R)-3-hydroxyacyl-CoA + NADP(+) = a 3-oxoacyl-CoA + NADPH + H(+). The protein operates within biopolymer metabolism; poly-(R)-3-hydroxybutanoate biosynthesis. The chain is Acetoacetyl-CoA reductase (phaB) from Acinetobacter sp. (strain RA3849).